A 32-amino-acid chain; its full sequence is Fibrinolytic enzyme (32 aa).

The N-terminus is blocked.

Its activity is regulated as follows. Inhibited by phenylmethanesulfonyl fluoride (PMSF). Not inhibited by EDTA, EGTA, beta-mercaptoethanol, indoacetamide, benzamidine, aprotinin, pepstatin A and trypsin inhibitor. In terms of biological role, plasmin-like serine protease. Has fibrinolytic and fibrinogenolytic but not plasminogenolytic activity. Cleaves after Arg and Lys residues. This Hediste japonica (Polychaete worm) protein is Fibrinolytic enzyme.